The following is a 206-amino-acid chain: Large ribosomal subunit protein uL3 (206 aa).

Positions 127 to 151 (SGGPSSHGSKFHRHLGGTGQATTPA) are disordered.

Belongs to the universal ribosomal protein uL3 family. Part of the 50S ribosomal subunit. Forms a cluster with proteins L14 and L19.

One of the primary rRNA binding proteins, it binds directly near the 3'-end of the 23S rRNA, where it nucleates assembly of the 50S subunit. In Borrelia garinii subsp. bavariensis (strain ATCC BAA-2496 / DSM 23469 / PBi) (Borreliella bavariensis), this protein is Large ribosomal subunit protein uL3.